Here is a 453-residue protein sequence, read N- to C-terminus: Bifunctional protein GlmU (453 aa).

Positions 1-225 are pyrophosphorylase; the sequence is MNIVILAAGT…EWETLGVNSK (225 aa). UDP-N-acetyl-alpha-D-glucosamine is bound by residues 6-9, K20, Q71, 76-77, 98-100, G135, E150, N165, and N223; these read LAAG, GT, and YGD. Residue D100 coordinates Mg(2+). N223 contributes to the Mg(2+) binding site. Residues 226-246 are linker; that stretch reads QQLAELERIHQRNVADALLVA. The tract at residues 247-453 is N-acetyltransferase; that stretch reads GVTLADPARL…GYVRPTKKKS (207 aa). R329 and K347 together coordinate UDP-N-acetyl-alpha-D-glucosamine. The active-site Proton acceptor is the H359. 2 residues coordinate UDP-N-acetyl-alpha-D-glucosamine: Y362 and N373. Residues A376, 382 to 383, S401, and A419 contribute to the acetyl-CoA site; that span reads NY.

This sequence in the N-terminal section; belongs to the N-acetylglucosamine-1-phosphate uridyltransferase family. In the C-terminal section; belongs to the transferase hexapeptide repeat family. In terms of assembly, homotrimer. The cofactor is Mg(2+).

The protein localises to the cytoplasm. The enzyme catalyses alpha-D-glucosamine 1-phosphate + acetyl-CoA = N-acetyl-alpha-D-glucosamine 1-phosphate + CoA + H(+). It carries out the reaction N-acetyl-alpha-D-glucosamine 1-phosphate + UTP + H(+) = UDP-N-acetyl-alpha-D-glucosamine + diphosphate. Its pathway is nucleotide-sugar biosynthesis; UDP-N-acetyl-alpha-D-glucosamine biosynthesis; N-acetyl-alpha-D-glucosamine 1-phosphate from alpha-D-glucosamine 6-phosphate (route II): step 2/2. The protein operates within nucleotide-sugar biosynthesis; UDP-N-acetyl-alpha-D-glucosamine biosynthesis; UDP-N-acetyl-alpha-D-glucosamine from N-acetyl-alpha-D-glucosamine 1-phosphate: step 1/1. It participates in bacterial outer membrane biogenesis; LPS lipid A biosynthesis. Functionally, catalyzes the last two sequential reactions in the de novo biosynthetic pathway for UDP-N-acetylglucosamine (UDP-GlcNAc). The C-terminal domain catalyzes the transfer of acetyl group from acetyl coenzyme A to glucosamine-1-phosphate (GlcN-1-P) to produce N-acetylglucosamine-1-phosphate (GlcNAc-1-P), which is converted into UDP-GlcNAc by the transfer of uridine 5-monophosphate (from uridine 5-triphosphate), a reaction catalyzed by the N-terminal domain. The sequence is that of Bifunctional protein GlmU from Paraburkholderia xenovorans (strain LB400).